Reading from the N-terminus, the 72-residue chain is NAD(P)H-quinone oxidoreductase subunit O (72 aa).

This sequence belongs to the complex I NdhO subunit family. As to quaternary structure, NDH-1 can be composed of about 15 different subunits; different subcomplexes with different compositions have been identified which probably have different functions.

The protein resides in the cellular thylakoid membrane. The catalysed reaction is a plastoquinone + NADH + (n+1) H(+)(in) = a plastoquinol + NAD(+) + n H(+)(out). The enzyme catalyses a plastoquinone + NADPH + (n+1) H(+)(in) = a plastoquinol + NADP(+) + n H(+)(out). In terms of biological role, NDH-1 shuttles electrons from an unknown electron donor, via FMN and iron-sulfur (Fe-S) centers, to quinones in the respiratory and/or the photosynthetic chain. The immediate electron acceptor for the enzyme in this species is believed to be plastoquinone. Couples the redox reaction to proton translocation, and thus conserves the redox energy in a proton gradient. Cyanobacterial NDH-1 also plays a role in inorganic carbon-concentration. The polypeptide is NAD(P)H-quinone oxidoreductase subunit O (Trichodesmium erythraeum (strain IMS101)).